Reading from the N-terminus, the 96-residue chain is Ferredoxin (96 aa).

One can recognise a 2Fe-2S ferredoxin-type domain in the interval 4-94; sequence YKVKLLTPEG…DVVIETHKEE (91 aa). Residues Cys-40, Cys-45, Cys-48, and Cys-78 each contribute to the [2Fe-2S] cluster site.

Belongs to the 2Fe2S plant-type ferredoxin family. It depends on [2Fe-2S] cluster as a cofactor.

The protein resides in the plastid. It is found in the chloroplast. Functionally, ferredoxins are iron-sulfur proteins that transfer electrons in a wide variety of metabolic reactions. This is Ferredoxin from Panax ginseng (Korean ginseng).